The chain runs to 257 residues: Deoxyribose-phosphate aldolase (257 aa).

The active-site Proton donor/acceptor is Asp102. Catalysis depends on Lys166, which acts as the Schiff-base intermediate with acetaldehyde. Lys198 functions as the Proton donor/acceptor in the catalytic mechanism.

It belongs to the DeoC/FbaB aldolase family. DeoC type 2 subfamily.

The protein localises to the cytoplasm. The catalysed reaction is 2-deoxy-D-ribose 5-phosphate = D-glyceraldehyde 3-phosphate + acetaldehyde. Its pathway is carbohydrate degradation; 2-deoxy-D-ribose 1-phosphate degradation; D-glyceraldehyde 3-phosphate and acetaldehyde from 2-deoxy-alpha-D-ribose 1-phosphate: step 2/2. Its function is as follows. Catalyzes a reversible aldol reaction between acetaldehyde and D-glyceraldehyde 3-phosphate to generate 2-deoxy-D-ribose 5-phosphate. This Shewanella halifaxensis (strain HAW-EB4) protein is Deoxyribose-phosphate aldolase.